The primary structure comprises 258 residues: Small ribosomal subunit protein mS23 (258 aa).

This sequence belongs to the mitochondrion-specific ribosomal protein mS23 family. Component of the mitochondrial small ribosomal subunit.

The protein resides in the mitochondrion. The sequence is that of Small ribosomal subunit protein mS23 from Aspergillus fumigatus (strain CBS 144.89 / FGSC A1163 / CEA10) (Neosartorya fumigata).